The following is a 73-amino-acid chain: MSDVNKKFDSKKDQLSGKAKEVEGKVTGDRAREAQGKTQSLMGKAKDKLADAEETVKGVVDEAKDKMKKKSDD.

Basic and acidic residues-rich tracts occupy residues 1 to 35 (MSDV…REAQ) and 44 to 73 (KAKD…KSDD). The disordered stretch occupies residues 1–73 (MSDVNKKFDS…KDKMKKKSDD (73 aa)).

Belongs to the UPF0337 (CsbD) family.

The chain is UPF0337 protein lp_1708 from Lactiplantibacillus plantarum (strain ATCC BAA-793 / NCIMB 8826 / WCFS1) (Lactobacillus plantarum).